The chain runs to 315 residues: Cytochrome c biogenesis protein CcsA (315 aa).

7 helical membrane-spanning segments follow: residues 17-37 (LGFA…WAVA), 72-92 (ISNL…AQLF), 101-121 (IVSA…SFVL), 146-166 (VIMC…GVFL), 221-241 (SITA…VWAN), 255-272 (TWAL…HTRI), and 282-302 (AILA…VNLL).

Belongs to the CcmF/CycK/Ccl1/NrfE/CcsA family. May interact with ccs1.

It localises to the cellular thylakoid membrane. In terms of biological role, required during biogenesis of c-type cytochromes (cytochrome c6 and cytochrome f) at the step of heme attachment. This chain is Cytochrome c biogenesis protein CcsA, found in Prochlorococcus marinus (strain NATL2A).